The chain runs to 436 residues: Proteasome-activating nucleotidase (436 aa).

Positions 15–97 form a coiled coil; sequence EELCRLYRSL…LKSESEQLRS (83 aa). Residues 222–227 and His-361 each bind ATP; that span reads GTGKTL. Positions 434-436 are docks into pockets in the proteasome alpha-ring to cause gate opening; that stretch reads MFA.

This sequence belongs to the AAA ATPase family. Homohexamer. The hexameric complex has a two-ring architecture resembling a top hat that caps the 20S proteasome core at one or both ends. Upon ATP-binding, the C-terminus of PAN interacts with the alpha-rings of the proteasome core by binding to the intersubunit pockets.

The protein localises to the cytoplasm. Functionally, ATPase which is responsible for recognizing, binding, unfolding and translocation of substrate proteins into the archaeal 20S proteasome core particle. Is essential for opening the gate of the 20S proteasome via an interaction with its C-terminus, thereby allowing substrate entry and access to the site of proteolysis. Thus, the C-termini of the proteasomal ATPase function like a 'key in a lock' to induce gate opening and therefore regulate proteolysis. Unfolding activity requires energy from ATP hydrolysis, whereas ATP binding alone promotes ATPase-20S proteasome association which triggers gate opening, and supports translocation of unfolded substrates. This chain is Proteasome-activating nucleotidase, found in Methanoregula boonei (strain DSM 21154 / JCM 14090 / 6A8).